Reading from the N-terminus, the 265-residue chain is Undecaprenyl-diphosphatase (265 aa).

7 helical membrane passes run 41–61, 75–95, 104–124, 137–157, 180–200, 215–235, and 244–264; these read IAYT…LIYF, LKFL…LYVI, YNPS…GIYI, LSTK…LPGV, YSYL…LLFT, GIAL…GFLL, and YLID…GLII.

It belongs to the UppP family.

It localises to the cell membrane. It carries out the reaction di-trans,octa-cis-undecaprenyl diphosphate + H2O = di-trans,octa-cis-undecaprenyl phosphate + phosphate + H(+). Catalyzes the dephosphorylation of undecaprenyl diphosphate (UPP). The polypeptide is Undecaprenyl-diphosphatase (Saccharolobus islandicus (strain Y.N.15.51 / Yellowstone #2) (Sulfolobus islandicus)).